The primary structure comprises 251 residues: Capsid protein (251 aa).

Positions 1 to 29 (MPKRDAPWRSMAGTSKVSRNANYSPRSGI) are disordered. The short motif at 3–20 (KRDAPWRSMAGTSKVSRN) is the Bipartite nuclear localization signal element. The span at 12 to 25 (AGTSKVSRNANYSP) shows a compositional bias: polar residues. The short motif at 35–49 (KAAEWVNRPMYRKPR) is the Nuclear localization signal element. Residues 63 to 80 (CEGPCKVQSFEQRHDILH) fold into a zinc finger. Positions 96-117 (ITHRVGKRFCVKSVYILGKIWM) match the Nuclear export signal motif. Positions 195–242 (RRFWKVNNHVVYNHQEAGKYENHTENALLLYMACTHASNPVYATLKIR) match the Bipartite nuclear localization signal motif.

The protein belongs to the geminiviridae capsid protein family. As to quaternary structure, homomultimer. Binds to single-stranded and double-stranded viral DNA. Interacts (via nuclear localization signals) with host importin alpha-1a.

Its subcellular location is the virion. It localises to the host nucleus. Encapsidates the viral DNA into characteristic twinned ('geminate') particles. Binds the genomic viral ssDNA and shuttles it into and out of the cell nucleus. The CP of bipartite geminiviruses is not required for cell-to-cell or systemic movement. The protein is Capsid protein of Solanum tuberosum (Potato).